The following is a 371-amino-acid chain: Pyruvate dehydrogenase E1 component subunit alpha (371 aa).

As to quaternary structure, heterodimer of an alpha and a beta chain. It depends on thiamine diphosphate as a cofactor.

It carries out the reaction N(6)-[(R)-lipoyl]-L-lysyl-[protein] + pyruvate + H(+) = N(6)-[(R)-S(8)-acetyldihydrolipoyl]-L-lysyl-[protein] + CO2. Its function is as follows. The pyruvate dehydrogenase complex catalyzes the overall conversion of pyruvate to acetyl-CoA and CO(2). It contains multiple copies of three enzymatic components: pyruvate dehydrogenase (E1), dihydrolipoamide acetyltransferase (E2) and lipoamide dehydrogenase (E3). This Bacillus cereus protein is Pyruvate dehydrogenase E1 component subunit alpha.